A 282-amino-acid polypeptide reads, in one-letter code: ATP synthase gamma chain (282 aa).

This sequence belongs to the ATPase gamma chain family. In terms of assembly, F-type ATPases have 2 components, CF(1) - the catalytic core - and CF(0) - the membrane proton channel. CF(1) has five subunits: alpha(3), beta(3), gamma(1), delta(1), epsilon(1). CF(0) has three main subunits: a, b and c.

The protein resides in the cell membrane. In terms of biological role, produces ATP from ADP in the presence of a proton gradient across the membrane. The gamma chain is believed to be important in regulating ATPase activity and the flow of protons through the CF(0) complex. This Clostridium acetobutylicum (strain ATCC 824 / DSM 792 / JCM 1419 / IAM 19013 / LMG 5710 / NBRC 13948 / NRRL B-527 / VKM B-1787 / 2291 / W) protein is ATP synthase gamma chain.